The chain runs to 352 residues: MDYQVSSPTYDIDYYTSEPCQKINVKQIAARLLPPLYSLVFIFGFVGNILVVLILINCKRLKSMTDIYLLNLAISDLLFLLTVPFWAHYAAAQWDFGNTMCQLLTGLYFIGFFSGIFFIILLTIDRYLAIVHAVFALKARTVTFGVVTSVITWVVAVFASLPRIIFTRSQREGLHYACSSHFPYSQYQFWKNFQTLKIVILGLVLPLLVMVICYSGILKTLLRCRNEKKRHRAVRLIFTIMIVYFLFWAPYNIVLLLNTFQEFFGLNNCSSSNRLDQAMQVTETLGMTHCCINPIIYAFVGEKFRNYLLVFFQKHIAKRFCKCCSIFQQEAPERASSVYTRSTGEQEISVGL.

Topologically, residues 1–30 are extracellular; that stretch reads MDYQVSSPTYDIDYYTSEPCQKINVKQIAA. Sulfotyrosine is present on Y3. S6 and S7 each carry an O-linked (GalNAc...) serine glycan. A sulfotyrosine mark is found at Y10, Y14, and Y15. Intrachain disulfides connect C20–C269 and C101–C178. The chain crosses the membrane as a helical span at residues 31-58; it reads RLLPPLYSLVFIFGFVGNILVVLILINC. Over 59-68 the chain is Cytoplasmic; it reads KRLKSMTDIY. Residues 69–89 traverse the membrane as a helical segment; it reads LLNLAISDLLFLLTVPFWAHY. The Extracellular portion of the chain corresponds to 90 to 102; the sequence is AAAQWDFGNTMCQ. The helical transmembrane segment at 103–124 threads the bilayer; the sequence is LLTGLYFIGFFSGIFFIILLTI. Over 125-141 the chain is Cytoplasmic; that stretch reads DRYLAIVHAVFALKART. A helical membrane pass occupies residues 142 to 166; it reads VTFGVVTSVITWVVAVFASLPRIIF. Residues 167-198 are Extracellular-facing; that stretch reads TRSQREGLHYACSSHFPYSQYQFWKNFQTLKI. The helical transmembrane segment at 199–218 threads the bilayer; sequence VILGLVLPLLVMVICYSGIL. The Cytoplasmic portion of the chain corresponds to 219-235; it reads KTLLRCRNEKKRHRAVR. Residues 236 to 260 form a helical membrane-spanning segment; the sequence is LIFTIMIVYFLFWAPYNIVLLLNTF. Residues 261 to 277 are Extracellular-facing; the sequence is QEFFGLNNCSSSNRLDQ. A helical transmembrane segment spans residues 278–301; it reads AMQVTETLGMTHCCINPIIYAFVG. Residues 302-352 lie on the Cytoplasmic side of the membrane; the sequence is EKFRNYLLVFFQKHIAKRFCKCCSIFQQEAPERASSVYTRSTGEQEISVGL. Residues C321, C323, and C324 are each lipidated (S-palmitoyl cysteine). A phosphoserine; by BARK1 mark is found at S336, S337, S342, and S349.

It belongs to the G-protein coupled receptor 1 family. Interacts with PRAF2. Efficient ligand binding to CCL3/MIP-1alpha and CCL4/MIP-1beta requires sulfation, O-glycosylation and sialic acid modifications. Glycosylation on Ser-6 is required for efficient binding of CCL4. Interacts with GRK2. Interacts with ARRB1 and ARRB2. Interacts with CNIH4. Interacts with S100A4; this interaction stimulates T-lymphocyte chemotaxis. Sulfated on at least 2 of the N-terminal tyrosines. Sulfation is required for efficient binding of the chemokines, CCL3 and CCL4. In terms of processing, palmitoylation in the C-terminal is important for cell surface expression. Post-translationally, phosphorylation on serine residues in the C-terminal is stimulated by binding CC chemokines especially by APO-RANTES. O-glycosylated, but not N-glycosylated. Ser-6 appears to be the major site even if Ser-7 may be also O-glycosylated. Also sialylated glycans present which contribute to chemokine binding. Thr-16 and Ser-17 may also be glycosylated and, if so, with small moieties such as a T-antigen.

Its subcellular location is the cell membrane. Receptor for a number of inflammatory CC-chemokines including CCL3/MIP-1-alpha, CCL4/MIP-1-beta and RANTES and subsequently transduces a signal by increasing the intracellular calcium ion level. May play a role in the control of granulocytic lineage proliferation or differentiation. Participates in T-lymphocyte migration to the infection site by acting as a chemotactic receptor. The polypeptide is C-C chemokine receptor type 5 (CCR5) (Chlorocebus pygerythrus (Vervet monkey)).